We begin with the raw amino-acid sequence, 89 residues long: Small ribosomal subunit protein bS20 (89 aa).

The span at 1–12 (MANHKSAIKRHR) shows a compositional bias: basic residues. A disordered region spans residues 1-26 (MANHKSAIKRHRQSVERAGRNRAART).

Belongs to the bacterial ribosomal protein bS20 family.

Functionally, binds directly to 16S ribosomal RNA. This chain is Small ribosomal subunit protein bS20, found in Desulfovibrio desulfuricans (strain ATCC 27774 / DSM 6949 / MB).